A 275-amino-acid polypeptide reads, in one-letter code: 2,3,4,5-tetrahydropyridine-2,6-dicarboxylate N-succinyltransferase (275 aa).

Arginine 108 and aspartate 145 together coordinate substrate.

This sequence belongs to the transferase hexapeptide repeat family. As to quaternary structure, homotrimer.

The protein localises to the cytoplasm. It catalyses the reaction (S)-2,3,4,5-tetrahydrodipicolinate + succinyl-CoA + H2O = (S)-2-succinylamino-6-oxoheptanedioate + CoA. It participates in amino-acid biosynthesis; L-lysine biosynthesis via DAP pathway; LL-2,6-diaminopimelate from (S)-tetrahydrodipicolinate (succinylase route): step 1/3. This is 2,3,4,5-tetrahydropyridine-2,6-dicarboxylate N-succinyltransferase from Roseobacter denitrificans (strain ATCC 33942 / OCh 114) (Erythrobacter sp. (strain OCh 114)).